The chain runs to 872 residues: Probable cation-transporting P-type ATPase (872 aa).

The Cytoplasmic portion of the chain corresponds to 1 to 41; that stretch reads MNKWTGLSAAAVLESRAQHGANLIPTKKLTPFWLLFLEQFK. A helical membrane pass occupies residues 42 to 62; that stretch reads SLVVILLLVATILSLVVAIIS. The Extracellular portion of the chain corresponds to 63-79; the sequence is GVNANWLFDHNLVIEWT. A helical transmembrane segment spans residues 80–100; the sequence is QPFVILITVLANSLIGSIQEF. The Cytoplasmic segment spans residues 101–237; the sequence is KAQKSAHTLK…TKLSPLQQKL (137 aa). Residues 238–257 form a helical membrane-spanning segment; sequence EKVGKWFSWFGLGLFVVVFL. Over 258 to 275 the chain is Extracellular; sequence VQLGLLGFHNFSANWSIA. The chain crosses the membrane as a helical span at residues 276–293; sequence LIGAIALVVAIIPEGLVT. The Cytoplasmic segment spans residues 294–642; that stretch reads FINVIFALSV…EQGRKTFLTC (349 aa). D331 functions as the 4-aspartylphosphate intermediate in the catalytic mechanism. Residues D587 and D591 each coordinate Mg(2+). The helical transmembrane segment at 643–662 threads the bilayer; that stretch reads KRVLFNLFLTSIAGTIVVLL. Over 663–685 the chain is Extracellular; the sequence is GLFVLGEVFREQLSKANHNFQVF. Residues 686–706 traverse the membrane as a helical segment; sequence TPTQLLIINLFVHGFPAVALA. Residues 707-724 are Cytoplasmic-facing; that stretch reads IQPVQEKLMLKPFSTKNL. A helical membrane pass occupies residues 725-747; that stretch reads FYNRGGFDLIWQSLLLSFLTLLF. The Extracellular segment spans residues 748–768; sequence YSLGMVYAINDPELGKSGDLI. A helical transmembrane segment spans residues 769–788; the sequence is NRAGATCGFMVLGGSAALNS. The Cytoplasmic portion of the chain corresponds to 789 to 801; that stretch reads LNLMVDRPLVATN. A helical membrane pass occupies residues 802–824; the sequence is PKHYGIVWLGALSSIFVFLLIIF. The Extracellular segment spans residues 825–842; the sequence is INPLGLVFSTLKDLTAHP. The helical transmembrane segment at 843-863 threads the bilayer; sequence VLIGYSFGGVLLYMTINEVVK. Over 864 to 872 the chain is Cytoplasmic; the sequence is LIRLSYGSV.

It belongs to the cation transport ATPase (P-type) (TC 3.A.3) family. Type II subfamily.

It is found in the cell membrane. The catalysed reaction is ATP + H2O = ADP + phosphate + H(+). Could mediate calcium influx. In Mycoplasma pneumoniae (strain ATCC 29342 / M129 / Subtype 1) (Mycoplasmoides pneumoniae), this protein is Probable cation-transporting P-type ATPase (pacL).